A 290-amino-acid chain; its full sequence is 4-diphosphocytidyl-2-C-methyl-D-erythritol kinase (290 aa).

K8 is an active-site residue. 89–99 provides a ligand contact to ATP; that stretch reads PIGAGVGGGSS. The active site involves D131.

Belongs to the GHMP kinase family. IspE subfamily.

It carries out the reaction 4-CDP-2-C-methyl-D-erythritol + ATP = 4-CDP-2-C-methyl-D-erythritol 2-phosphate + ADP + H(+). It functions in the pathway isoprenoid biosynthesis; isopentenyl diphosphate biosynthesis via DXP pathway; isopentenyl diphosphate from 1-deoxy-D-xylulose 5-phosphate: step 3/6. In terms of biological role, catalyzes the phosphorylation of the position 2 hydroxy group of 4-diphosphocytidyl-2C-methyl-D-erythritol. This chain is 4-diphosphocytidyl-2-C-methyl-D-erythritol kinase, found in Chlamydia felis (strain Fe/C-56) (Chlamydophila felis).